Consider the following 618-residue polypeptide: Glycine--tRNA ligase 2 (618 aa).

Glutamate 187 lines the glycine pocket. ATP contacts are provided by residues 219-221 (RNE) and 230-231 (RV). Glutamate 238 contributes to the glycine binding site. 347 to 348 (EC) serves as a coordination point for ATP. 466–468 (EPS) provides a ligand contact to glycine. Position 473 (arginine 473) interacts with ATP.

Belongs to the class-II aminoacyl-tRNA synthetase family. As to quaternary structure, homodimer.

Its subcellular location is the cytoplasm. The enzyme catalyses tRNA(Gly) + glycine + ATP = glycyl-tRNA(Gly) + AMP + diphosphate. It carries out the reaction 2 ATP + H(+) = P(1),P(4)-bis(5'-adenosyl) tetraphosphate + diphosphate. Functionally, catalyzes the ATP-dependent ligation of glycine to the 3'-end of its cognate tRNA, via the formation of an aminoacyl-adenylate intermediate (Gly-AMP). Also produces diadenosine tetraphosphate (Ap4A), a universal pleiotropic signaling molecule needed for cell regulation pathways, by direct condensation of 2 ATPs. Thereby, may play a special role in Ap4A homeostasis. This is Glycine--tRNA ligase 2 (GRS2) from Saccharomyces cerevisiae (strain ATCC 204508 / S288c) (Baker's yeast).